Reading from the N-terminus, the 413-residue chain is Putative glutamate--cysteine ligase 2 (413 aa).

Residues 392–413 form a disordered region; sequence GGVCALSTPQGDPLPGWAERLH.

The protein belongs to the glutamate--cysteine ligase type 2 family. YbdK subfamily.

It catalyses the reaction L-cysteine + L-glutamate + ATP = gamma-L-glutamyl-L-cysteine + ADP + phosphate + H(+). ATP-dependent carboxylate-amine ligase which exhibits weak glutamate--cysteine ligase activity. This Bordetella bronchiseptica (strain ATCC BAA-588 / NCTC 13252 / RB50) (Alcaligenes bronchisepticus) protein is Putative glutamate--cysteine ligase 2.